The following is a 259-amino-acid chain: MSEVKDRALRALQLMDLTTLNDDDTDAKVIALCHQAKSPAGNTAAICIYPRFIPLARKTLREQGTPEIRIATVTNFPHGNDDSEIALAETRAAIAYGADEVDVVFPYRALMAGNEAIGFELVKACKQACREANVLLKVIIESGELKEASLIRKASEIAIDAGADFIKTSTGKVAVNATPEVAEIMLRTIAAKGVQKQVGFKPAGGVRSADDAALYLKLADNILGPDWADARHFRFGASSLLASLLNAAGFNGATSDSNY.

Asp102 functions as the Proton donor/acceptor in the catalytic mechanism. Residue Lys167 is the Schiff-base intermediate with acetaldehyde of the active site. The active-site Proton donor/acceptor is Lys201.

Belongs to the DeoC/FbaB aldolase family. DeoC type 2 subfamily.

The protein resides in the cytoplasm. It carries out the reaction 2-deoxy-D-ribose 5-phosphate = D-glyceraldehyde 3-phosphate + acetaldehyde. It participates in carbohydrate degradation; 2-deoxy-D-ribose 1-phosphate degradation; D-glyceraldehyde 3-phosphate and acetaldehyde from 2-deoxy-alpha-D-ribose 1-phosphate: step 2/2. In terms of biological role, catalyzes a reversible aldol reaction between acetaldehyde and D-glyceraldehyde 3-phosphate to generate 2-deoxy-D-ribose 5-phosphate. The protein is Deoxyribose-phosphate aldolase of Erwinia tasmaniensis (strain DSM 17950 / CFBP 7177 / CIP 109463 / NCPPB 4357 / Et1/99).